The chain runs to 407 residues: Phosphopentomutase (407 aa).

Mn(2+) contacts are provided by aspartate 10, aspartate 306, histidine 311, aspartate 347, histidine 348, and histidine 359.

This sequence belongs to the phosphopentomutase family. Mn(2+) serves as cofactor.

Its subcellular location is the cytoplasm. The catalysed reaction is 2-deoxy-alpha-D-ribose 1-phosphate = 2-deoxy-D-ribose 5-phosphate. It catalyses the reaction alpha-D-ribose 1-phosphate = D-ribose 5-phosphate. Its pathway is carbohydrate degradation; 2-deoxy-D-ribose 1-phosphate degradation; D-glyceraldehyde 3-phosphate and acetaldehyde from 2-deoxy-alpha-D-ribose 1-phosphate: step 1/2. In terms of biological role, isomerase that catalyzes the conversion of deoxy-ribose 1-phosphate (dRib-1-P) and ribose 1-phosphate (Rib-1-P) to deoxy-ribose 5-phosphate (dRib-5-P) and ribose 5-phosphate (Rib-5-P), respectively. This Buchnera aphidicola subsp. Acyrthosiphon pisum (strain APS) (Acyrthosiphon pisum symbiotic bacterium) protein is Phosphopentomutase.